Consider the following 225-residue polypeptide: Cytidylate kinase (225 aa).

11 to 19 (GPAGVGKST) lines the ATP pocket.

This sequence belongs to the cytidylate kinase family. Type 1 subfamily.

It localises to the cytoplasm. The catalysed reaction is CMP + ATP = CDP + ADP. It carries out the reaction dCMP + ATP = dCDP + ADP. This is Cytidylate kinase from Lawsonia intracellularis (strain PHE/MN1-00).